The sequence spans 379 residues: uncharacterized protein (379 aa).

Belongs to the glycosyltransferase 28 family.

This is an uncharacterized protein from Methanosarcina mazei (strain ATCC BAA-159 / DSM 3647 / Goe1 / Go1 / JCM 11833 / OCM 88) (Methanosarcina frisia).